The sequence spans 581 residues: Sodium/hydrogen exchanger 8 (581 aa).

Helical transmembrane passes span 60–80, 84–104, 123–143, 156–176, 191–211, 264–284, 311–331, 354–374, 379–399, 417–437, and 451–471; these read MTIF…HLLI, LHFL…GAVI, PNMF…YSLH, LFAV…IYFL, FAFG…IFNA, FLKM…ISAL, GLAE…GIVM, VAFL…FSFP, ISFV…NIFP, MFIM…SLHL, and TTIV…MPLI. Residue Thr510 is modified to Phosphothreonine. Phosphoserine occurs at positions 571 and 573.

It belongs to the monovalent cation:proton antiporter 1 (CPA1) transporter (TC 2.A.36) family. In terms of tissue distribution, ubiquitous. Strongly expressed in skeletal muscle and kidney. Detected throughout the entire gastrointestinal tract, with high expression detected in stomach, duodenum and ascending colon.

It localises to the golgi apparatus membrane. It is found in the golgi apparatus. The protein localises to the trans-Golgi network membrane. The protein resides in the endosome. Its subcellular location is the multivesicular body membrane. It localises to the apical cell membrane. It is found in the cytoplasmic vesicle. The protein localises to the secretory vesicle. The protein resides in the acrosome. The enzyme catalyses Na(+)(in) + H(+)(out) = Na(+)(out) + H(+)(in). HOE642 inhibits SLC9A8 activity. Functionally, na(+)/H(+) antiporter. Mediates the electoneutral exchange of intracellular H(+) ions for extracellular Na(+) in 1:1 stoichiometry. Acts as an Na(+)/H(+) exchanger in the trans-Golgi. Contributes to the regulation of pH regulation of Golgi apparatus, and consequently, in protein trafficking and endosomal morphology. In germ cells, plays a crucial role in acrosome biogenesis and sperm development, probably by playing a role in the fusion of the Golgi-derived vesicles that form the acrosomal cap. Can also be active at the cell surface of specialized cells. In the small intestine, at the cell membrane, plays a major physiological role in transepithelial absorption of Na(+) and regulates intracellular pH homeostasis of intestinal epithelial cells. Acts as an important regulator of mucosal integrity in the intestine and in the stomach, could mediate the pH fluctuation necessary for mucin exocytosis or assist membrane trafficking of other proteins. Plays a role in photoreceptor survival and in the maintenance of intracellular pH homeostasis in retinal pigment epithelium (RPE cells). This Homo sapiens (Human) protein is Sodium/hydrogen exchanger 8.